The sequence spans 64 residues: Large ribosomal subunit protein bL33 (64 aa).

The protein belongs to the bacterial ribosomal protein bL33 family.

The protein is Large ribosomal subunit protein bL33 of Nostoc sp. (strain PCC 7120 / SAG 25.82 / UTEX 2576).